Reading from the N-terminus, the 386-residue chain is MLVLVINSGSSSLKFQVRDVAAGTVLTEGLIEKIGMGNGGDGDGEIVGPRDHAEALEQVEAAIHEELGDLKLGAVGHRVVHGGERFGEPVLIDNEITRAIERLNPLAPLHNPANVLGIRAITRKWPDMPQVAVFDTAFHRTLPEHAWRYAVPDELYTNHGIRRYGFHGTSHEYVARRAAALLDLPVEEFDAVIAHLGNGASITAIQGGHSVDTSMGFTPLEGLVMGTRSGDLDPSILVFLGRAGWTPEDLDSMLNRESGLKGLAGNNDMRSVVEASEDGDAKAAMALAVTSYRLAKYIGGYHVAVGGAKALVFTAGIGENSHQFRALVADRLGALGVEVDAGLNAARSKEPRIISTPQSAIPVLVVPTDEERAIAEATAAVAGSGR.

Asn7 is a Mg(2+) binding site. Lys14 is a binding site for ATP. Arg78 serves as a coordination point for substrate. Residue Asp135 is the Proton donor/acceptor of the active site. Residues 195–199 (HLGNG), 268–270 (DMR), and 316–320 (GIGEN) each bind ATP. Glu370 lines the Mg(2+) pocket.

It belongs to the acetokinase family. Homodimer. Mg(2+) is required as a cofactor. Requires Mn(2+) as cofactor.

The protein resides in the cytoplasm. It catalyses the reaction acetate + ATP = acetyl phosphate + ADP. Its pathway is metabolic intermediate biosynthesis; acetyl-CoA biosynthesis; acetyl-CoA from acetate: step 1/2. In terms of biological role, catalyzes the formation of acetyl phosphate from acetate and ATP. Can also catalyze the reverse reaction. This is Acetate kinase from Pseudarthrobacter chlorophenolicus (strain ATCC 700700 / DSM 12829 / CIP 107037 / JCM 12360 / KCTC 9906 / NCIMB 13794 / A6) (Arthrobacter chlorophenolicus).